The sequence spans 668 residues: Type II methyltransferase M.MwoI (668 aa).

Belongs to the N(4)/N(6)-methyltransferase family. N(4) subfamily.

It carries out the reaction a 2'-deoxycytidine in DNA + S-adenosyl-L-methionine = an N(4)-methyl-2'-deoxycytidine in DNA + S-adenosyl-L-homocysteine + H(+). Functionally, a beta subtype methylase, recognizes the double-stranded DNA sequence 5'-GCNNNNNNNGC-3', methylates C-2 on both strands, and protects the DNA from cleavage by the MwoI endonuclease. The sequence is that of Type II methyltransferase M.MwoI from Methanothermobacter wolfeii (Methanobacterium wolfei).